A 334-amino-acid polypeptide reads, in one-letter code: Aspartate carbamoyltransferase catalytic subunit (334 aa).

Carbamoyl phosphate-binding residues include R71 and T72. K99 provides a ligand contact to L-aspartate. Residues R121, H151, and Q154 each contribute to the carbamoyl phosphate site. Positions 184 and 239 each coordinate L-aspartate. The carbamoyl phosphate site is built by G280 and P281.

It belongs to the aspartate/ornithine carbamoyltransferase superfamily. ATCase family. As to quaternary structure, heterododecamer (2C3:3R2) of six catalytic PyrB chains organized as two trimers (C3), and six regulatory PyrI chains organized as three dimers (R2).

The enzyme catalyses carbamoyl phosphate + L-aspartate = N-carbamoyl-L-aspartate + phosphate + H(+). The protein operates within pyrimidine metabolism; UMP biosynthesis via de novo pathway; (S)-dihydroorotate from bicarbonate: step 2/3. Its function is as follows. Catalyzes the condensation of carbamoyl phosphate and aspartate to form carbamoyl aspartate and inorganic phosphate, the committed step in the de novo pyrimidine nucleotide biosynthesis pathway. In Pseudomonas fluorescens biotype A, this protein is Aspartate carbamoyltransferase catalytic subunit.